A 98-amino-acid chain; its full sequence is Beta-elicitin cinnamomin (98 aa).

Intrachain disulfides connect cysteine 3/cysteine 71, cysteine 27/cysteine 56, and cysteine 51/cysteine 95. Positions 33-42 match the Beak-like motif 1 (ligand binding) motif; that stretch reads YSMLTATALP. The Beak-like motif 2 (ligand binding) signature appears at 72-83; that stretch reads DLTVPTSGLVLD.

It belongs to the elicitin family.

Its subcellular location is the secreted. Its function is as follows. Induces local and distal defense responses (incompatible hypersensitive reaction) in plants from the solanaceae and cruciferae families. Elicits leaf necrosis and causes the accumulation of pathogenesis-related proteins. Might interact with the lipidic molecules of the plasma membrane. Elicitins are able to load, carry, and transfer sterols between membranes. The polypeptide is Beta-elicitin cinnamomin (Phytophthora cinnamomi (Cinnamon fungus)).